The sequence spans 219 residues: Thiamine-phosphate synthase (219 aa).

Residues Q48 to K52 and N84 each bind 4-amino-2-methyl-5-(diphosphooxymethyl)pyrimidine. The Mg(2+) site is built by D85 and D104. S123 is a binding site for 4-amino-2-methyl-5-(diphosphooxymethyl)pyrimidine. T150–S152 contributes to the 2-[(2R,5Z)-2-carboxy-4-methylthiazol-5(2H)-ylidene]ethyl phosphate binding site. Residue K153 coordinates 4-amino-2-methyl-5-(diphosphooxymethyl)pyrimidine. Residues G181 and I199–S200 contribute to the 2-[(2R,5Z)-2-carboxy-4-methylthiazol-5(2H)-ylidene]ethyl phosphate site.

It belongs to the thiamine-phosphate synthase family. Mg(2+) is required as a cofactor.

It carries out the reaction 2-[(2R,5Z)-2-carboxy-4-methylthiazol-5(2H)-ylidene]ethyl phosphate + 4-amino-2-methyl-5-(diphosphooxymethyl)pyrimidine + 2 H(+) = thiamine phosphate + CO2 + diphosphate. It catalyses the reaction 2-(2-carboxy-4-methylthiazol-5-yl)ethyl phosphate + 4-amino-2-methyl-5-(diphosphooxymethyl)pyrimidine + 2 H(+) = thiamine phosphate + CO2 + diphosphate. The enzyme catalyses 4-methyl-5-(2-phosphooxyethyl)-thiazole + 4-amino-2-methyl-5-(diphosphooxymethyl)pyrimidine + H(+) = thiamine phosphate + diphosphate. It functions in the pathway cofactor biosynthesis; thiamine diphosphate biosynthesis; thiamine phosphate from 4-amino-2-methyl-5-diphosphomethylpyrimidine and 4-methyl-5-(2-phosphoethyl)-thiazole: step 1/1. Functionally, condenses 4-methyl-5-(beta-hydroxyethyl)thiazole monophosphate (THZ-P) and 2-methyl-4-amino-5-hydroxymethyl pyrimidine pyrophosphate (HMP-PP) to form thiamine monophosphate (TMP). In Helicobacter pylori (strain ATCC 700392 / 26695) (Campylobacter pylori), this protein is Thiamine-phosphate synthase.